Here is a 692-residue protein sequence, read N- to C-terminus: Elongation factor G (692 aa).

The tr-type G domain maps to 8-283 (NRIRNIGIAA…AVIDYLPAPT (276 aa)). GTP contacts are provided by residues 17 to 24 (AHIDAGKT), 81 to 85 (DTPGH), and 135 to 138 (NKMD).

This sequence belongs to the TRAFAC class translation factor GTPase superfamily. Classic translation factor GTPase family. EF-G/EF-2 subfamily.

It localises to the cytoplasm. Functionally, catalyzes the GTP-dependent ribosomal translocation step during translation elongation. During this step, the ribosome changes from the pre-translocational (PRE) to the post-translocational (POST) state as the newly formed A-site-bound peptidyl-tRNA and P-site-bound deacylated tRNA move to the P and E sites, respectively. Catalyzes the coordinated movement of the two tRNA molecules, the mRNA and conformational changes in the ribosome. The polypeptide is Elongation factor G (Helicobacter acinonychis (strain Sheeba)).